Reading from the N-terminus, the 328-residue chain is Lateral signaling target 1 protein (328 aa).

Disordered regions lie at residues 56 to 78, 108 to 135, and 177 to 200; these read SSQD…GLRS, PTHY…SASS, and PVQP…RLNG. The segment covering 178 to 200 has biased composition (polar residues); it reads VQPSTSTSRNNVSQISGSSRLNG.

Interacts with fbf-2; the interaction probably mediates the release of the C-terminal tail of fbf-2 from the RNA-binding domain, thereby altering its RNA-binding affinity.

In terms of biological role, plays a role in germline stem cell maintenance, perhaps acting in concert with mRNA-binding factor fbf-2. May regulate fbf-2 by modulating RNA-binding and perhaps by competition with the intramolecular interaction between the fbf-2 RNA-binding domain and C-terminal tail. The protein is Lateral signaling target 1 protein of Caenorhabditis elegans.